A 140-amino-acid polypeptide reads, in one-letter code: RxLR effector protein CRE2 (140 aa).

Positions methionine 1–serine 24 are cleaved as a signal peptide. The RxLR-dEER motif lies at arginine 56–arginine 72.

Belongs to the RxLR effector family.

Its subcellular location is the secreted. The protein resides in the host cell. Its function is as follows. Effector that is involved in host plant infection. Contributes to virulence during the early infection stage, by inhibiting plant defense responses induced by both PAMP-triggered immunity (PTI) and effector-triggered immunity (ETI). In Phytophthora infestans (strain T30-4) (Potato late blight agent), this protein is RxLR effector protein CRE2.